Consider the following 452-residue polypeptide: Photoreceptor ankyrin repeat protein (452 aa).

4 ANK repeats span residues 94 to 123, 130 to 160, 164 to 193, and 223 to 257; these read CRLG…SPEE, NGRT…DVNQ, GGDT…GLDL, and RGKT…QLSQ. Disordered stretches follow at residues 335 to 369 and 405 to 427; these read LGTR…SPWV and SKAS…QSLA. Pro residues predominate over residues 349–362; sequence APPPPLVPQSPPGS. Polar residues predominate over residues 406 to 424; it reads KASSSSHQCQPKPSPSGHQ.

It localises to the cytoplasm. The protein resides in the cytosol. The protein localises to the nucleus. Its function is as follows. Acts as a transcriptional repressor for CRX-activated photoreceptor gene regulation. The protein is Photoreceptor ankyrin repeat protein of Homo sapiens (Human).